The chain runs to 161 residues: Spermidine N(1)-acetyltransferase (161 aa).

Positions 3 to 160 constitute an N-acetyltransferase domain; the sequence is IEIRKLSIED…SDFIMEKKYE (158 aa). Residues 92–94, 99–104, Asn131, and Ser136 each bind acetyl-CoA; these read LYL and THKKIG. The active-site Proton donor is the Tyr138. Residue Lys140 coordinates acetyl-CoA.

Belongs to the acetyltransferase family. In terms of assembly, monomer or homodimer.

It catalyses the reaction an alkane-alpha,omega-diamine + acetyl-CoA = an N-acetylalkane-alpha,omega-diamine + CoA + H(+). Functionally, involved in the protection against polyamine toxicity by regulating their concentration. Could also be involved in the negative control of sporulation as well as production of degradative enzymes such as alpha-amylase, levansucrase and alkaline phosphatase. Catalyzes the transfer of an acetyl group from acetyl coenzyme A (AcCoA) to an acceptor substrate and release both CoA and the acetylated product. It can use a variety of substrates including spermidine, L-tryptophan, L-leucine, L-lysine, dopamine and tyramine. The protein is Spermidine N(1)-acetyltransferase of Thermoplasma acidophilum (strain ATCC 25905 / DSM 1728 / JCM 9062 / NBRC 15155 / AMRC-C165).